The following is a 77-amino-acid chain: Large ribosomal subunit protein bL28 (77 aa).

Residues 1–20 form a disordered region; the sequence is MSRVCQVTGKGPVTGNNISH.

The protein belongs to the bacterial ribosomal protein bL28 family.

This Pseudomonas fluorescens (strain Pf0-1) protein is Large ribosomal subunit protein bL28.